The following is a 185-amino-acid chain: NOP protein chaperone 1 (185 aa).

The disordered stretch occupies residues 1–40; it reads MEVHGKPKASPSCSSPTRDSSGVPVSKELLTAGSDGRGGI. The span at 10–21 shows a compositional bias: low complexity; the sequence is SPSCSSPTRDSS. Phosphoserine occurs at positions 34 and 66. The interval 118–185 is disordered; that stretch reads FEMNQSDSKE…LDSPASKKKK (68 aa). Residues 143–152 show a composition bias toward acidic residues; that stretch reads SESEDEDDSI. The residue at position 178 (Ser-178) is a Phosphoserine.

Interacts with NOP58, RUVBL1 and RUVBL2; the interactions are direct and NOPCHAP1 bridges the association of NOP58 with RUVBL1:RUVBL2 even in absence of snoRNAs. The interactions with RUVBL1 and RUVBL2 are disrupted upon ATP binding.

It localises to the nucleus. Functionally, client-loading PAQosome/R2TP complex cofactor that selects NOP58 to promote box C/D small nucleolar ribonucleoprotein (snoRNP) assembly. Acts as a bridge between NOP58 and the R2TP complex via RUVBL1:RUVBL2. The protein is NOP protein chaperone 1 of Homo sapiens (Human).